Consider the following 832-residue polypeptide: MPATNSDEPLVKFELYQLKKCYYIVSENATATIFRILKITQSEDELSISIEEAAKILFRQKLQLYLEKLENESADGKLILVTKAYAILGLFRFTAGYYLYLCTERKVVAVIGGHNVYHVDKTQFIELNPSRRHNTSVERKCMSSIEKVDLARTFYFSYSYDLSQTIQYGFTHPIPQHQVRDMFVWNWNMLRPILDSVGIDSPWCIPLIHGFVDQAKLSVYGKPIIVTLIARRSRHFAGARFLRRGIRDDGYVANEVETEQIVFDGSASSFPISSTTPGIPCYTSYVQHRGSIPLRWSQEFSNITPKPPIGIDFHDPFYASTALHFDRLFGHYGIPCIVLNLVKSSEKVKRESLLLDEFESAIQYLNQFLKDSQKIQYIAWDMSAASKKKVPVTKTLEQMASDIVKKTGFFCTADRFFPGTFQTGVVRTNCVDCLDRTNAAQFVIGKCVLAAQLRALGVLDSPQLDYESDAVRLLAEMYHGHGDAIALQYGGSLLVNTLDTYRKNNQWSSTSRDLIESVKRFYSNSFVDFQRQEAISLFLGNFTVHGKIVVFGEKRLQALTEKFKNGQLVRRDYRYWWTPVYVNQELRCKNAYCDSIQRKGIKFPANYFDNVYTPNSISSFSEVLLPNLISTLNFAPLSLIPLLRKSFLPLSYNGFGIEAPSLNPFIPRRNQPRDMFKTSAEEENEDEDEDDDKFRRVSLYKWLFNNEERPVHKFIRKRLHQIPVSNKVQPRDQKQPDFKIPNTDINVYKIHFQYNNISGLADNYTLLSKHDRAMYNNYADYSPDKIKEIKEKELNTYNDYFNSAISENPTLKSDRSEKVAFYSAWITDYKST.

One can recognise an SAC domain in the interval 145–491 (IEKVDLARTF…GDAIALQYGG (347 aa)).

As to quaternary structure, component of the PI(3,5)P2 regulatory complex. Mg(2+) is required as a cofactor.

It localises to the cytoplasm. The protein localises to the vacuole membrane. It catalyses the reaction a 1,2-diacyl-sn-glycero-3-phospho-(1D-myo-inositol-3,5-bisphosphate) + H2O = a 1,2-diacyl-sn-glycero-3-phospho-(1D-myo-inositol-3-phosphate) + phosphate. The PI(3,5)P2 regulatory complex regulates both the synthesis and turnover of phosphatidylinositol 3,5-bisphosphate (PtdIns(3,5)P2). This chain is Polyphosphoinositide phosphatase, found in Schizosaccharomyces pombe (strain 972 / ATCC 24843) (Fission yeast).